Here is a 145-residue protein sequence, read N- to C-terminus: Protein SprT-like (145 aa).

Residues 5-141 enclose the SprT-like domain; sequence DYVREVSLAD…CGRCHGRLIK (137 aa). His64 provides a ligand contact to Zn(2+). Glu65 is an active-site residue. His68 contacts Zn(2+).

This sequence belongs to the SprT family. Zn(2+) is required as a cofactor.

It localises to the cytoplasm. The protein is Protein SprT-like of Streptococcus equi subsp. zooepidemicus (strain H70).